Reading from the N-terminus, the 171-residue chain is Co-chaperone protein HscB (171 aa).

One can recognise a J domain in the interval 2–74 (DYFTLFGLPA…LTRAEYLLSL (73 aa)).

This sequence belongs to the HscB family. Interacts with HscA and stimulates its ATPase activity. Interacts with IscU.

Co-chaperone involved in the maturation of iron-sulfur cluster-containing proteins. Seems to help targeting proteins to be folded toward HscA. This Citrobacter koseri (strain ATCC BAA-895 / CDC 4225-83 / SGSC4696) protein is Co-chaperone protein HscB.